The following is a 338-amino-acid chain: MKRLALALKQKKVASWKLEEVKELTELIKNSNTILIGSLEGFPADKLHEIRKKLRGKAIIKVTKNTLFKIAAKNAGINIEKLEQYLTGPNVFIFTKDNPFLTNMFFENYKLRRYAMPGDKAEEEVIIPAGDTGMPAGPILSVFGKLKVQTKVQDGKVHVVKDTVVAKPGDVIPTEALPILQKLGIMPVYVKLKIKVAYHEGLVIPAENLKLNLEGYRSNIAEAYRNAFTLAVEIAYPVPDVLKFTINKIFKNAITLASEIGYLTPESAQAVISKAVAKAYALATAISGKVDLGVKLPSAQQTQTQQSTAEEKKEEKKEEEKKGPSEEEIGSGLASLFG.

Positions 297-338 (PSAQQTQTQQSTAEEKKEEKKEEEKKGPSEEEIGSGLASLFG) are disordered. Over residues 298–308 (SAQQTQTQQST) the composition is skewed to low complexity. The span at 309-325 (AEEKKEEKKEEEKKGPS) shows a compositional bias: basic and acidic residues.

This sequence belongs to the universal ribosomal protein uL10 family. As to quaternary structure, part of the 50S ribosomal subunit. Forms part of the ribosomal stalk which helps the ribosome interact with GTP-bound translation factors. Forms a heptameric L10(L12)2(L12)2(L12)2 complex, where L10 forms an elongated spine to which the L12 dimers bind in a sequential fashion.

In terms of biological role, forms part of the ribosomal stalk, playing a central role in the interaction of the ribosome with GTP-bound translation factors. The chain is Large ribosomal subunit protein uL10 from Saccharolobus islandicus (strain M.14.25 / Kamchatka #1) (Sulfolobus islandicus).